A 204-amino-acid chain; its full sequence is Guanylate kinase (204 aa).

A Guanylate kinase-like domain is found at 5–184 (GLLIVLSGPS…ACDKIKAIVL (180 aa)). 12–19 (GPSGVGKG) is an ATP binding site.

The protein belongs to the guanylate kinase family.

It is found in the cytoplasm. It carries out the reaction GMP + ATP = GDP + ADP. In terms of biological role, essential for recycling GMP and indirectly, cGMP. This is Guanylate kinase (gmk) from Bacillus subtilis (strain 168).